The sequence spans 83 residues: RNA-binding protein Hfq (83 aa).

One can recognise a Sm domain in the interval 10 to 69 (DPFLNALRREHVPVSIYLVNGIKLQGQIESFDQYVVLLRNTVTQMVYKHAISTIVPGRAV).

Belongs to the Hfq family. As to quaternary structure, homohexamer.

RNA chaperone that binds small regulatory RNA (sRNAs) and mRNAs to facilitate mRNA translational regulation in response to envelope stress, environmental stress and changes in metabolite concentrations. Also binds with high specificity to tRNAs. This chain is RNA-binding protein Hfq, found in Delftia acidovorans (strain DSM 14801 / SPH-1).